The sequence spans 147 residues: MEKYNREEFEEVIVDIGRVTKVVKGGRRFRFTALVVVGNRNGLVGFGYGKAKEVPDAMRKAIDDAFKNIIHVKLKGSTIPHDVEVKYNASRILLRPASEGTGVIAGGGARPIIELAGIKDILTKSLGSNNSANVVRATIKALSLLKS.

In terms of domain architecture, S5 DRBM spans 9–72 (FEEVIVDIGR…DDAFKNIIHV (64 aa)).

The protein belongs to the universal ribosomal protein uS5 family. As to quaternary structure, part of the 30S ribosomal subunit. Contacts proteins S4 and S8.

Functionally, with S4 and S12 plays an important role in translational accuracy. Located at the back of the 30S subunit body where it stabilizes the conformation of the head with respect to the body. The polypeptide is Small ribosomal subunit protein uS5 (Campylobacter curvus (strain 525.92)).